The following is a 44-amino-acid chain: MRDIKTYLSTAPVLATLWFGSLAGLLIEINRLFPDALTFPFFSF.

The helical transmembrane segment at 7–27 threads the bilayer; that stretch reads YLSTAPVLATLWFGSLAGLLI.

It belongs to the PsaJ family.

It localises to the plastid. The protein resides in the chloroplast thylakoid membrane. Functionally, may help in the organization of the PsaE and PsaF subunits. In Calycanthus floridus var. glaucus (Eastern sweetshrub), this protein is Photosystem I reaction center subunit IX.